The chain runs to 1070 residues: DNA-directed RNA polymerase subunit beta (1070 aa).

This sequence belongs to the RNA polymerase beta chain family. In terms of assembly, in plastids the minimal PEP RNA polymerase catalytic core is composed of four subunits: alpha, beta, beta', and beta''. When a (nuclear-encoded) sigma factor is associated with the core the holoenzyme is formed, which can initiate transcription.

It is found in the plastid. The protein resides in the chloroplast. It carries out the reaction RNA(n) + a ribonucleoside 5'-triphosphate = RNA(n+1) + diphosphate. DNA-dependent RNA polymerase catalyzes the transcription of DNA into RNA using the four ribonucleoside triphosphates as substrates. This is DNA-directed RNA polymerase subunit beta from Illicium oligandrum (Star anise).